The chain runs to 79 residues: uncharacterized protein (79 aa).

An N-terminal signal peptide occupies residues 1 to 33 (MRLSIRAIVLFALVWIGLLMSGYGVLVGSKVNA).

This is an uncharacterized protein from Salmonella paratyphi A (strain ATCC 9150 / SARB42).